A 309-amino-acid chain; its full sequence is Malate dehydrogenase (309 aa).

NAD(+) contacts are provided by residues 9 to 14 (GAGFVG) and Asp33. Arg82 and Arg88 together coordinate substrate. Residues Asn95 and 118–120 (VNN) contribute to the NAD(+) site. Substrate is bound by residues Asn120 and Arg151. His175 functions as the Proton acceptor in the catalytic mechanism.

The protein belongs to the LDH/MDH superfamily. MDH type 3 family.

It catalyses the reaction (S)-malate + NAD(+) = oxaloacetate + NADH + H(+). Catalyzes the reversible oxidation of malate to oxaloacetate. This Roseiflexus castenholzii (strain DSM 13941 / HLO8) protein is Malate dehydrogenase.